Reading from the N-terminus, the 617-residue chain is Proline--tRNA ligase (617 aa).

The protein belongs to the class-II aminoacyl-tRNA synthetase family. ProS type 1 subfamily. In terms of assembly, homodimer.

It is found in the cytoplasm. The catalysed reaction is tRNA(Pro) + L-proline + ATP = L-prolyl-tRNA(Pro) + AMP + diphosphate. Catalyzes the attachment of proline to tRNA(Pro) in a two-step reaction: proline is first activated by ATP to form Pro-AMP and then transferred to the acceptor end of tRNA(Pro). As ProRS can inadvertently accommodate and process non-cognate amino acids such as alanine and cysteine, to avoid such errors it has two additional distinct editing activities against alanine. One activity is designated as 'pretransfer' editing and involves the tRNA(Pro)-independent hydrolysis of activated Ala-AMP. The other activity is designated 'posttransfer' editing and involves deacylation of mischarged Ala-tRNA(Pro). The misacylated Cys-tRNA(Pro) is not edited by ProRS. The chain is Proline--tRNA ligase from Treponema pallidum (strain Nichols).